The chain runs to 542 residues: Putative DEAD-box ATP-dependent RNA helicase 43 (542 aa).

Residues 97 to 125 (KNFMDMKFPSPLLRMLKDKGIMHPTPIQV) carry the Q motif motif. The Helicase ATP-binding domain maps to 128-312 (LPVVLSGRDM…TSALVKPVTV (185 aa)). 141 to 148 (AFTGSGKT) contributes to the ATP binding site. The DEAD box motif lies at 260 to 263 (DEAD). The Helicase C-terminal domain occupies 323 to 483 (DVIQEVEYVK…RIPPVLAELN (161 aa)). The segment at 499-516 (KGCAYCGGLGHRILQCPK) adopts a CCHC-type zinc-finger fold.

The protein belongs to the DEAD box helicase family. DDX41 subfamily.

The enzyme catalyses ATP + H2O = ADP + phosphate + H(+). The sequence is that of Putative DEAD-box ATP-dependent RNA helicase 43 (RH43) from Arabidopsis thaliana (Mouse-ear cress).